Consider the following 163-residue polypeptide: Probable chemoreceptor glutamine deamidase CheD (163 aa).

The protein belongs to the CheD family.

The catalysed reaction is L-glutaminyl-[protein] + H2O = L-glutamyl-[protein] + NH4(+). In terms of biological role, probably deamidates glutamine residues to glutamate on methyl-accepting chemotaxis receptors (MCPs), playing an important role in chemotaxis. The protein is Probable chemoreceptor glutamine deamidase CheD of Borreliella burgdorferi (strain ATCC 35210 / DSM 4680 / CIP 102532 / B31) (Borrelia burgdorferi).